The following is a 93-amino-acid chain: Small ribosomal subunit protein uS19 (93 aa).

The segment at 73 to 93 (EFSPTRTYRGHNKKDKKIQKK) is disordered. Basic residues predominate over residues 80-93 (YRGHNKKDKKIQKK).

Belongs to the universal ribosomal protein uS19 family.

Its function is as follows. Protein S19 forms a complex with S13 that binds strongly to the 16S ribosomal RNA. This chain is Small ribosomal subunit protein uS19 (rpsS), found in Aster yellows phytoplasma.